The chain runs to 419 residues: Gamma-glutamyl phosphate reductase (419 aa).

This sequence belongs to the gamma-glutamyl phosphate reductase family.

The protein resides in the cytoplasm. It catalyses the reaction L-glutamate 5-semialdehyde + phosphate + NADP(+) = L-glutamyl 5-phosphate + NADPH + H(+). It functions in the pathway amino-acid biosynthesis; L-proline biosynthesis; L-glutamate 5-semialdehyde from L-glutamate: step 2/2. Functionally, catalyzes the NADPH-dependent reduction of L-glutamate 5-phosphate into L-glutamate 5-semialdehyde and phosphate. The product spontaneously undergoes cyclization to form 1-pyrroline-5-carboxylate. This chain is Gamma-glutamyl phosphate reductase, found in Nitratidesulfovibrio vulgaris (strain DP4) (Desulfovibrio vulgaris).